An 80-amino-acid polypeptide reads, in one-letter code: Gamma-conotoxin-like Am6.6 (80 aa).

The N-terminal stretch at 1-19 (MEKLTILLLVAAILMSTQA) is a signal peptide. A propeptide spanning residues 20-45 (LNQEQRQQAKINLLSKKKPSAERWRR) is cleaved from the precursor. 3 disulfides stabilise this stretch: Cys47–Cys61, Cys54–Cys65, and Cys60–Cys70. 2 positions are modified to 4-carboxyglutamate: Glu56 and Glu59. The residue at position 71 (Glu71) is a 4-carboxyglutamate. Pro76 is modified (4-hydroxyproline). Residues 78 to 80 (RAI) constitute a propeptide that is removed on maturation.

This sequence belongs to the conotoxin O2 family. In terms of tissue distribution, expressed by the venom duct.

Its subcellular location is the secreted. Its function is as follows. Gamma-conotoxins may act on voltage-gated non-specific cation pacemaker channels (HCN). The polypeptide is Gamma-conotoxin-like Am6.6 (Conus amadis (Amadis cone)).